A 608-amino-acid polypeptide reads, in one-letter code: Zinc metalloproteinase-disintegrin-like agkihagin (608 aa).

The N-terminal stretch at 1–20 (MIQVLLVTICLAAFPYQGSS) is a signal peptide. Positions 21-189 (IILESGNVND…KKASQSNLTP (169 aa)) are excised as a propeptide. A Peptidase M12B domain is found at 199-395 (KFVKLFLVAD…NMPQCILKKP (197 aa)). Intrachain disulfides connect C310-C390, C350-C374, and C352-C357. Residue H335 participates in Zn(2+) binding. The active site involves E336. Zn(2+) is bound by residues H339 and H345. The region spanning 403-488 (PPVCGNYFVE…ADCTDRFQKN (86 aa)) is the Disintegrin domain. Residues V405, N408, F410, E412, E415, and D418 each coordinate Ca(2+). Disulfide bonds link C406/C435, C417/C430, C419/C425, C429/C452, C443/C449, C448/C474, C461/C481, C468/C499, C492/C504, C511/C561, C526/C570, C539/C549, C556/C596, and C590/C601. A D/ECD-tripeptide motif is present at residues 467–469 (ECD). Ca(2+) contacts are provided by D469, M470, D472, D483, and R484. N501 carries N-linked (GlcNAc...) asparagine glycosylation.

Belongs to the venom metalloproteinase (M12B) family. P-III subfamily. P-IIIc sub-subfamily. Homodimer; disulfide-linked. Zn(2+) serves as cofactor. Expressed by the venom gland.

It is found in the secreted. Inhibited by EDTA and EGTA. Not inhibited by PMSF, antipain, pepstatin, and iodoacetamide. Strongly inhibits the collagen-induced human platelet aggregation. Hydrolyzes the Aalpha-chain of fibrinogen (FGA), without cleavage of Bbeta- and gamma-chains. Induces apoptosis and strongly inhibits proliferation of endothelial cells as well as adhesion of the cells to extracellular matrix proteins. The polypeptide is Zinc metalloproteinase-disintegrin-like agkihagin (Deinagkistrodon acutus (Hundred-pace snake)).